The primary structure comprises 120 residues: Synaptobrevin (120 aa).

The tract at residues 1-38 (MSAPPSGPAPDAQGGAPGQPTGPPGAPPNTTSNRRLQQ) is disordered. The Cytoplasmic segment spans residues 1-98 (MSAPPSGPAP…KRKYWWKNCK (98 aa)). Positions 29–38 (NTTSNRRLQQ) are enriched in polar residues. The 61-residue stretch at 35 to 95 (RLQQTQAQVE…AKLKRKYWWK (61 aa)) folds into the v-SNARE coiled-coil homology domain. A helical; Anchor for type IV membrane protein membrane pass occupies residues 99 to 118 (MMIMLGGIGAIIVIVIIIYF). Residues 119–120 (FT) are Vesicular-facing.

It belongs to the synaptobrevin family. In terms of tissue distribution, nervous system specific.

The protein resides in the cytoplasmic vesicle. Its subcellular location is the secretory vesicle. It localises to the synaptic vesicle membrane. The protein localises to the synapse. It is found in the synaptosome. This protein may play a role in packaging, transport or release of neurotransmitters. This chain is Synaptobrevin, found in Tetronarce californica (Pacific electric ray).